Here is a 462-residue protein sequence, read N- to C-terminus: tRNA modification GTPase MnmE (462 aa).

Positions 23, 88, and 127 each coordinate (6S)-5-formyl-5,6,7,8-tetrahydrofolate. In terms of domain architecture, TrmE-type G spans 224–383; the sequence is GLATVIIGRP…LEKAIADLFF (160 aa). Asparagine 234 serves as a coordination point for K(+). Residues 234-239, 253-259, and 278-281 each bind GTP; these read NVGKSS, TDIPGTT, and DTAG. Serine 238 provides a ligand contact to Mg(2+). 3 residues coordinate K(+): threonine 253, isoleucine 255, and threonine 258. Mg(2+) is bound at residue threonine 259. Lysine 462 lines the (6S)-5-formyl-5,6,7,8-tetrahydrofolate pocket.

The protein belongs to the TRAFAC class TrmE-Era-EngA-EngB-Septin-like GTPase superfamily. TrmE GTPase family. As to quaternary structure, homodimer. Heterotetramer of two MnmE and two MnmG subunits. It depends on K(+) as a cofactor.

The protein localises to the cytoplasm. Its function is as follows. Exhibits a very high intrinsic GTPase hydrolysis rate. Involved in the addition of a carboxymethylaminomethyl (cmnm) group at the wobble position (U34) of certain tRNAs, forming tRNA-cmnm(5)s(2)U34. This chain is tRNA modification GTPase MnmE, found in Geobacillus thermodenitrificans (strain NG80-2).